A 460-amino-acid polypeptide reads, in one-letter code: Argininosuccinate lyase (460 aa).

Belongs to the lyase 1 family. Argininosuccinate lyase subfamily.

Its subcellular location is the cytoplasm. It carries out the reaction 2-(N(omega)-L-arginino)succinate = fumarate + L-arginine. It functions in the pathway amino-acid biosynthesis; L-arginine biosynthesis; L-arginine from L-ornithine and carbamoyl phosphate: step 3/3. This Nitratidesulfovibrio vulgaris (strain DSM 19637 / Miyazaki F) (Desulfovibrio vulgaris) protein is Argininosuccinate lyase.